We begin with the raw amino-acid sequence, 655 residues long: RalA-binding protein 1-A (655 aa).

The interval 1–153 (MTECFLPPAS…KKSKDLTAAD (153 aa)) is disordered. Over residues 52–68 (DILHEPPDIVSEDEKDH) the composition is skewed to basic and acidic residues. An ATP-binding site is contributed by 69-74 (GKKKGK). Basic residues-rich tracts occupy residues 69–79 (GKKKGKFKKKE) and 102–118 (KIKR…PSFS). Positions 102–119 (KIKRSKGIHVFKKPSFSK) are nuclear localization signal. The segment covering 119–150 (KKKEKDFKIKEKPKEEKHKEDKHKEKKSKDLT) has biased composition (basic and acidic residues). A run of 2 repeats spans residues 133–137 (EEKHK) and 138–142 (EDKHK). A 2 X 5 AA tandem repeats of E-[D/E]-K-H-K region spans residues 133–142 (EEKHKEDKHK). Positions 149 to 214 (LTAADVVKQW…PLVFRECIDF (66 aa)) are mediates association with membranes and could form transmembrane domains. Positions 187–383 (IPLIEAAERT…PLRWSNMATM (197 aa)) constitute a Rho-GAP domain. The mediates interaction with RALA and RALB stretch occupies residues 398-495 (RRQEFLLNCL…LTEQEELVAM (98 aa)). 413-420 (AGVKDLSK) contributes to the ATP binding site. The required to maintain nuclear localization stretch occupies residues 494 to 510 (AMEQYLRRQIATEKEEI). Residues 496–655 (EQYLRRQIAT…GKKLSSETLI (160 aa)) are mediates interaction with REPS1 and REPS2. Disordered regions lie at residues 520–548 (IQSR…EEEL) and 600–655 (LQEE…ETLI). The span at 532-548 (EEYSSESESESEDEEEL) shows a compositional bias: acidic residues. Basic and acidic residues predominate over residues 619 to 630 (NLPETKAPKDQP).

Interacts with the active, GTP-bound form of ralB and ralA.

Its subcellular location is the cell membrane. The protein resides in the cytoplasm. It localises to the cytosol. The protein localises to the cytoskeleton. It is found in the spindle pole. Its subcellular location is the nucleus. The protein resides in the mitochondrion. It localises to the cell projection. The protein localises to the lamellipodium. The catalysed reaction is an S-substituted glutathione(in) + ATP + H2O = an S-substituted glutathione(out) + ADP + phosphate + H(+). It catalyses the reaction ATP + H2O + xenobioticSide 1 = ADP + phosphate + xenobioticSide 2.. The enzyme catalyses leukotriene C4(in) + ATP + H2O = leukotriene C4(out) + ADP + phosphate + H(+). Multifunctional protein that functions as a downstream effector of ralA and ralB. As a GTPase-activating protein/GAP can inactivate CDC42 and RAC1 by stimulating their GTPase activity. As part of the Ral signaling pathway, may also regulate ligand-dependent EGF and insulin receptors-mediated endocytosis. During mitosis, may act as a scaffold protein in the phosphorylation of EPSIN/EPN1 by the mitotic kinase cyclin B-CDK1, preventing endocytosis during that phase of the cell cycle. During mitosis, also controls mitochondrial fission as an effector of ralA. Recruited to mitochondrion by ralA, acts as a scaffold to foster the mitotic kinase cyclin B-CDK1-mediated phosphorylation and activation of DNM1L. Acts on the cytoskeleton, to regulate pigment distribution and to regulate gastrulation. Functionally, could also function as a primary ATP-dependent active transporter for glutathione conjugates of electrophiles. May also actively catalyze the efflux of a wide range of substrates including xenobiotics like doxorubicin (DOX) contributing to cell multidrug resistance. The polypeptide is RalA-binding protein 1-A (ralbp1-a) (Xenopus laevis (African clawed frog)).